We begin with the raw amino-acid sequence, 276 residues long: Beta-lactamase OXA-1 (276 aa).

The first 25 residues, 1–25, serve as a signal peptide directing secretion; it reads MKNTIHINFAIFLIIANIIYSSASA. S71 (acyl-ester intermediate) is an active-site residue. 5 residues coordinate a beta-lactam: S71, K74, S118, T216, and A218. K74 is modified (N6-carboxylysine).

The protein belongs to the class-D beta-lactamase family. In terms of assembly, monomer.

The protein localises to the periplasm. It catalyses the reaction a beta-lactam + H2O = a substituted beta-amino acid. With respect to regulation, inhibited by penicillin sulfones. Only weakly inhibited by clavulanic acid and sulbactam. In terms of biological role, class D beta-lactamase which confers resistance to the beta-lactam antibiotics, including amoxicillin and ticarcillin. Acts via hydrolysis of the beta-lactam ring. Has penicillin- and cephalosporin-hydrolyzing activities. The sequence is that of Beta-lactamase OXA-1 from Escherichia coli.